The following is a 391-amino-acid chain: Tryptophan synthase beta chain (391 aa).

K84 carries the post-translational modification N6-(pyridoxal phosphate)lysine.

It belongs to the TrpB family. In terms of assembly, tetramer of two alpha and two beta chains. Requires pyridoxal 5'-phosphate as cofactor.

The enzyme catalyses (1S,2R)-1-C-(indol-3-yl)glycerol 3-phosphate + L-serine = D-glyceraldehyde 3-phosphate + L-tryptophan + H2O. It functions in the pathway amino-acid biosynthesis; L-tryptophan biosynthesis; L-tryptophan from chorismate: step 5/5. The beta subunit is responsible for the synthesis of L-tryptophan from indole and L-serine. This Caldanaerobacter subterraneus subsp. tengcongensis (strain DSM 15242 / JCM 11007 / NBRC 100824 / MB4) (Thermoanaerobacter tengcongensis) protein is Tryptophan synthase beta chain.